Reading from the N-terminus, the 37-residue chain is Large ribosomal subunit protein bL36 (37 aa).

It belongs to the bacterial ribosomal protein bL36 family.

This Colwellia psychrerythraea (strain 34H / ATCC BAA-681) (Vibrio psychroerythus) protein is Large ribosomal subunit protein bL36.